The sequence spans 183 residues: Putative manganese efflux pump MntP (183 aa).

The next 6 helical transmembrane spans lie at 3–23 (TISV…LSIY), 43–63 (TFGI…ILFI), 66–86 (ISLY…LMML), 107–127 (LIIM…TFSI), 134–154 (FLYT…GFIL), and 161–181 (ILGQ…SINI).

It belongs to the MntP (TC 9.B.29) family.

It localises to the cell inner membrane. Its function is as follows. Probably functions as a manganese efflux pump. This Fusobacterium nucleatum subsp. nucleatum (strain ATCC 25586 / DSM 15643 / BCRC 10681 / CIP 101130 / JCM 8532 / KCTC 2640 / LMG 13131 / VPI 4355) protein is Putative manganese efflux pump MntP.